Reading from the N-terminus, the 1379-residue chain is MAVEEKNSPTGAAMTNTGILVPSSQQSLPEWWTKTQKFFSRENTITPTFGYFRLLFGTQPGKTDIALIVIGTIAGIGAGIPFPLLGILFGELVDDLNSSTCSTTQAPPGGYQAAITTKVLQVIYVSILNFVCMYIHTGCWSMVGERLVRRLRTKYFHSLLRQEIAFTDTLPSGDVTSRLVSDIEVIQAGTSEKVGLFIGTISYFVAAYIVAFLKVATIAAMLMSVVPIYFLMAFGGGHYIKKYSGRISTHINAATSIVSSSLSHMSIVHAFNANARLEALFAQHLVSARMDALKKAITHSIQFGMLYFVAYASNALAFWQGSRMIADLAEGKPSKVSVGAVYTVIFVLLDASFVLSQMAPFMHIFASAASAGDRLMTTIKRQSAIDGTSSEGDSTISLASEEIELQDVTFNYPARPEVPVLQGVSFKIPPNKHTAIVGTSGSGKSTVVALLERLYDPITGCVRVGNRDLKEINVRHLRGSIGLVQQEPNLLDRSILENIAHGLVSSSQEKHKHLLPTLLGPSLSELTEKIRQGASEDEAVTEQGDVVREIVNLTRHAATLSNAIDFINALPDGLATRVGSSGAELSGGQKQRIALARALIRDPPVLLLDEATAALDSTSERLIQAALNKVSENVTTVSIAHRLATAKDADNIIVMQKGRVMEQGTHMDLVARDGVYAGMVRLQNIGKFSSSSSIMTESTQVDANIDRSLTTDTLLNKEEKLSLEQGVLDEKEKPAQLYMPEEADSLPTEPENEKEKPKQTLWATMKGSFPLIRPNILLISLGLITSIMIGVSYTGEAVIFGHTVGSLSVCRGGPSIRSSGMLFGLLFFILAIVKFAAVIVNGAAFGWAAEKTLYRTRVLSLRSLLRQPLEWHNADGRTPGLLVALVTSDASALSSLTGTTIGVLFSTVANLFAGVILSHVIAWRIAVVLLATLPVLLASGVLRLRVMAQYQKKHQKAYAKATAITVESVDNIKSIAAFSLEQEAYSVFNRSLKAPYKSNMKSVLHGNFWLSLAYSISTLVYALAYWWGSQQILAGMYTQVQFFIVLPALLFSTQSCGQMFALVPDISKARIAASNIVDLLSIKHEGDEEYDKTGSKASAKHTDPRFNMLEDKPRDVEAQLITTTPPSFPTKGMGVQFRNVHFRYPSRPNQPALDDLSINISPGQFCALVGPSGSGKSTTFALLEKFYNPASGSIIIDGVDITKQSGAAFRDTIALVPQENVMFEGTVAFNIGLGARPDVEATQEEIEEACRLANIHDTIAALPDGYNTVCSQDGKQFSGGQRQRLSIARALVRKPRLLLLDESTSALDVESEKHVQDALAKVARKTTIVAIAHRLNTIHRADRIFMIEGGRCVDQGTHAELVERCESYRANVIHQSLDA.

Residues 65 to 85 (IALIVIGTIAGIGAGIPFPLL) traverse the membrane as a helical segment. In terms of domain architecture, ABC transmembrane type-1 1 spans 69–367 (VIGTIAGIGA…MAPFMHIFAS (299 aa)). N-linked (GlcNAc...) asparagine glycosylation is present at Asn-97. The next 5 membrane-spanning stretches (helical) occupy residues 119-139 (VLQVIYVSILNFVCMYIHTGC), 193-213 (KVGLFIGTISYFVAAYIVAFL), 215-235 (VATIAAMLMSVVPIYFLMAFG), 301-321 (IQFGMLYFVAYASNALAFWQG), and 336-356 (VSVGAVYTVIFVLLDASFVLS). The region spanning 403-682 (IELQDVTFNY…DGVYAGMVRL (280 aa)) is the ABC transporter 1 domain. Position 438–445 (438–445 (GTSGSGKS)) interacts with ATP. N-linked (GlcNAc...) asparagine glycosylation is found at Asn-552 and Asn-633. Residues 738–758 (YMPEEADSLPTEPENEKEKPK) are disordered. 4 consecutive transmembrane segments (helical) span residues 781–801 (LGLITSIMIGVSYTGEAVIFG), 820–840 (GMLFGLLFFILAIVKFAAVIV), 901–921 (IGVLFSTVANLFAGVILSHVI), and 922–942 (AWRIAVVLLATLPVLLASGVL). Positions 781–1068 (LGLITSIMIG…MFALVPDISK (288 aa)) constitute an ABC transmembrane type-1 2 domain. Residue Asn-989 is glycosylated (N-linked (GlcNAc...) asparagine). A run of 2 helical transmembrane segments spans residues 1008–1028 (FWLSLAYSISTLVYALAYWWG) and 1032–1052 (ILAGMYTQVQFFIVLPALLFS). One can recognise an ABC transporter 2 domain in the interval 1135 to 1374 (VQFRNVHFRY…CESYRANVIH (240 aa)). Position 1170 to 1177 (1170 to 1177 (GPSGSGKS)) interacts with ATP.

This sequence belongs to the ABC transporter superfamily. ABCB family. Multidrug resistance exporter (TC 3.A.1.201) subfamily.

Its subcellular location is the cell membrane. Its function is as follows. Pleiotropic ABC efflux transporter that may be involved in the modulation susceptibility to a wide range of unrelated cytotoxic compounds. In Trichophyton equinum (strain ATCC MYA-4606 / CBS 127.97) (Horse ringworm fungus), this protein is ABC multidrug transporter MDR2.